A 278-amino-acid polypeptide reads, in one-letter code: Hydroxyethylthiazole kinase (278 aa).

Met48 is a substrate binding site. ATP is bound by residues Arg124 and Thr175. Gly202 contributes to the substrate binding site.

This sequence belongs to the Thz kinase family. Mg(2+) is required as a cofactor.

The catalysed reaction is 5-(2-hydroxyethyl)-4-methylthiazole + ATP = 4-methyl-5-(2-phosphooxyethyl)-thiazole + ADP + H(+). It functions in the pathway cofactor biosynthesis; thiamine diphosphate biosynthesis; 4-methyl-5-(2-phosphoethyl)-thiazole from 5-(2-hydroxyethyl)-4-methylthiazole: step 1/1. Catalyzes the phosphorylation of the hydroxyl group of 4-methyl-5-beta-hydroxyethylthiazole (THZ). In Clostridium botulinum (strain Eklund 17B / Type B), this protein is Hydroxyethylthiazole kinase.